The primary structure comprises 713 residues: RNA-binding protein vts1 (713 aa).

A compositionally biased stretch (low complexity) spans 154-188; sequence NSGLSLDKSLPSSPKGDSPSLSSSLPSLTTKSNLS. Disordered regions lie at residues 154 to 208, 254 to 336, 356 to 389, 554 to 596, and 667 to 713; these read NSGL…SSKH, EPPA…RDRG, DESS…SRPL, EKIE…GNEL, and KAAK…SSMD. 2 stretches are compositionally biased toward polar residues: residues 189–208 and 258–281; these read GNLN…SSKH and SSAS…NANV. Composition is skewed to low complexity over residues 282-297 and 304-320; these read TSSL…SKTT and SKKS…PNTS. Polar residues predominate over residues 321 to 330; the sequence is FFETPHNNIW. Residues 369–378 show a composition bias toward pro residues; sequence SPPPPPPPPE. Positions 559 to 569 are enriched in polar residues; that stretch reads PPNNSKNQTYR. The segment covering 570 to 583 has biased composition (basic residues); the sequence is RSSRGSNKTRKSIS. The 62-residue stretch at 595 to 656 folds into the SAM domain; it reads ELPQDIPSWL…LKSFQEVAPL (62 aa). The span at 670–681 shows a compositional bias: polar residues; it reads KNQSSESLTSFK. Residue Ser-673 is modified to Phosphoserine. Over residues 691–702 the composition is skewed to low complexity; it reads SGSMSNEISSNS. Over residues 703-713 the composition is skewed to polar residues; it reads TKQDVSSSSMD.

The protein belongs to the VTS1 family. As to quaternary structure, monomer. Binds to RNA.

It is found in the cytoplasm. The protein localises to the cytosol. Its subcellular location is the P-body. Functionally, RNA-binding protein involved in post-transcriptional regulation through transcript degradation. The chain is RNA-binding protein vts1 from Schizosaccharomyces pombe (strain 972 / ATCC 24843) (Fission yeast).